The primary structure comprises 332 residues: Glycerol-3-phosphate dehydrogenase [NAD(P)+] (332 aa).

Residues Trp-13, Lys-34, and Lys-108 each coordinate NADPH. Positions 108, 136, and 138 each coordinate sn-glycerol 3-phosphate. Residue Ala-140 coordinates NADPH. Residues Lys-191, Asp-244, Ser-254, Arg-255, and Asn-256 each coordinate sn-glycerol 3-phosphate. Lys-191 (proton acceptor) is an active-site residue. Arg-255 is a binding site for NADPH. Val-279 and Glu-281 together coordinate NADPH.

Belongs to the NAD-dependent glycerol-3-phosphate dehydrogenase family.

The protein localises to the cytoplasm. The catalysed reaction is sn-glycerol 3-phosphate + NAD(+) = dihydroxyacetone phosphate + NADH + H(+). It catalyses the reaction sn-glycerol 3-phosphate + NADP(+) = dihydroxyacetone phosphate + NADPH + H(+). The protein operates within membrane lipid metabolism; glycerophospholipid metabolism. Functionally, catalyzes the reduction of the glycolytic intermediate dihydroxyacetone phosphate (DHAP) to sn-glycerol 3-phosphate (G3P), the key precursor for phospholipid synthesis. This Francisella tularensis subsp. novicida (strain U112) protein is Glycerol-3-phosphate dehydrogenase [NAD(P)+].